We begin with the raw amino-acid sequence, 347 residues long: GMP reductase (347 aa).

108–131 (ADFEKTVQILALNPALNFVCIDVA) provides a ligand contact to NADP(+). Positions 181 and 183 each coordinate K(+). Cys-186 acts as the Thioimidate intermediate in catalysis. An NADP(+)-binding site is contributed by 216-239 (IVSDGGCTMPGDVAKAFGGGADFV).

Belongs to the IMPDH/GMPR family. GuaC type 1 subfamily. As to quaternary structure, homotetramer.

It catalyses the reaction IMP + NH4(+) + NADP(+) = GMP + NADPH + 2 H(+). Functionally, catalyzes the irreversible NADPH-dependent deamination of GMP to IMP. It functions in the conversion of nucleobase, nucleoside and nucleotide derivatives of G to A nucleotides, and in maintaining the intracellular balance of A and G nucleotides. This Salmonella choleraesuis (strain SC-B67) protein is GMP reductase.